Here is a 71-residue protein sequence, read N- to C-terminus: General transcription factor IIH subunit 5 (71 aa).

Residue Thr69 is modified to Phosphothreonine.

The protein belongs to the TFB5 family. Component of the 7-subunit TFIIH core complex composed of XPB/ERCC3, XPD/ERCC2, GTF2H1, GTF2H2, GTF2H3, GTF2H4 and GTF2H5, which is active in NER. The core complex associates with the 3-subunit CDK-activating kinase (CAK) module composed of CCNH/cyclin H, CDK7 and MNAT1 to form the 10-subunit holoenzyme (holo-TFIIH) active in transcription. Part of TBP-based Pol II pre-initiation complex (PIC), in which Pol II core assembles with general transcription factors and other specific initiation factors including GTF2E1, GTF2E2, GTF2F1, GTF2F2, TCEA1, ERCC2, ERCC3, GTF2H2, GTF2H3, GTF2H4, GTF2H5, GTF2A1, GTF2A2, GTF2B and TBP; this large multi-subunit PIC complex mediates DNA unwinding and targets Pol II core to the transcription start site where the first phosphodiester bond forms.

The protein localises to the nucleus. The protein resides in the cytoplasm. Component of the general transcription and DNA repair factor IIH (TFIIH) core complex, which is involved in general and transcription-coupled nucleotide excision repair (NER) of damaged DNA and, when complexed to CAK, in RNA transcription by RNA polymerase II. In NER, TFIIH acts by opening DNA around the lesion to allow the excision of the damaged oligonucleotide and its replacement by a new DNA fragment. In transcription, TFIIH has an essential role in transcription initiation. When the pre-initiation complex (PIC) has been established, TFIIH is required for promoter opening and promoter escape. Phosphorylation of the C-terminal tail (CTD) of the largest subunit of RNA polymerase II by the kinase module CAK controls the initiation of transcription. Necessary for the stability of the TFIIH complex and for the presence of normal levels of TFIIH in the cell. The sequence is that of General transcription factor IIH subunit 5 from Homo sapiens (Human).